Here is a 313-residue protein sequence, read N- to C-terminus: Methionyl-tRNA formyltransferase (313 aa).

Residue S113–P116 participates in (6S)-5,6,7,8-tetrahydrofolate binding.

The protein belongs to the Fmt family.

The enzyme catalyses L-methionyl-tRNA(fMet) + (6R)-10-formyltetrahydrofolate = N-formyl-L-methionyl-tRNA(fMet) + (6S)-5,6,7,8-tetrahydrofolate + H(+). Functionally, attaches a formyl group to the free amino group of methionyl-tRNA(fMet). The formyl group appears to play a dual role in the initiator identity of N-formylmethionyl-tRNA by promoting its recognition by IF2 and preventing the misappropriation of this tRNA by the elongation apparatus. This Francisella tularensis subsp. novicida (strain U112) protein is Methionyl-tRNA formyltransferase.